We begin with the raw amino-acid sequence, 597 residues long: NADH-quinone oxidoreductase subunit C/D (597 aa).

An NADH dehydrogenase I subunit C region spans residues 1-187; it reads MIDENKKKNT…ESFFLDEQKE (187 aa). Positions 211-597 are NADH dehydrogenase I subunit D; sequence DFMFLNLGPN…IDFVMSDVDR (387 aa).

The protein in the N-terminal section; belongs to the complex I 30 kDa subunit family. It in the C-terminal section; belongs to the complex I 49 kDa subunit family. As to quaternary structure, NDH-1 is composed of 13 different subunits. Subunits NuoB, CD, E, F, and G constitute the peripheral sector of the complex.

The protein resides in the cell inner membrane. The enzyme catalyses a quinone + NADH + 5 H(+)(in) = a quinol + NAD(+) + 4 H(+)(out). Its function is as follows. NDH-1 shuttles electrons from NADH, via FMN and iron-sulfur (Fe-S) centers, to quinones in the respiratory chain. The immediate electron acceptor for the enzyme in this species is believed to be ubiquinone. Couples the redox reaction to proton translocation (for every two electrons transferred, four hydrogen ions are translocated across the cytoplasmic membrane), and thus conserves the redox energy in a proton gradient. This is NADH-quinone oxidoreductase subunit C/D from Buchnera aphidicola subsp. Schizaphis graminum (strain Sg).